A 245-amino-acid polypeptide reads, in one-letter code: MSAHRVLLEVCVDTPAGLAAAIAGGADRVELCSALALQGLTPAPGLMAQAASAPIPVYPMIRPRHGDFCYDARDLDAMRRDIDAVRGYGLPGVTIGASQANGALDLKVLRKLVEQAEGLGTTLHRAFDVVPDMSEALEIAVELGFERVLTSGGALSALDATDRLAALVEQAGERISIMAGAGVRPGNIAELVRRTGVREAHGSFGGPVPGADPRSQLGAMGFVPPELRDTSQAAVAEAVKALRAL.

Belongs to the CutC family.

The protein localises to the cytoplasm. This Caulobacter vibrioides (strain ATCC 19089 / CIP 103742 / CB 15) (Caulobacter crescentus) protein is PF03932 family protein CutC.